Here is a 359-residue protein sequence, read N- to C-terminus: Biotin synthase (359 aa).

One can recognise a Radical SAM core domain in the interval 67–302; that stretch reads CCGNRVDLCS…QQILRYAGGR (236 aa). Residues Cys85, Cys89, and Cys92 each contribute to the [4Fe-4S] cluster site. Residues Cys130, Cys167, Cys227, and Arg297 each coordinate [2Fe-2S] cluster.

It belongs to the radical SAM superfamily. Biotin synthase family. In terms of assembly, homodimer. It depends on [4Fe-4S] cluster as a cofactor. The cofactor is [2Fe-2S] cluster.

The catalysed reaction is (4R,5S)-dethiobiotin + (sulfur carrier)-SH + 2 reduced [2Fe-2S]-[ferredoxin] + 2 S-adenosyl-L-methionine = (sulfur carrier)-H + biotin + 2 5'-deoxyadenosine + 2 L-methionine + 2 oxidized [2Fe-2S]-[ferredoxin]. Its pathway is cofactor biosynthesis; biotin biosynthesis; biotin from 7,8-diaminononanoate: step 2/2. Its function is as follows. Catalyzes the conversion of dethiobiotin (DTB) to biotin by the insertion of a sulfur atom into dethiobiotin via a radical-based mechanism. This chain is Biotin synthase, found in Gloeothece citriformis (strain PCC 7424) (Cyanothece sp. (strain PCC 7424)).